We begin with the raw amino-acid sequence, 207 residues long: LexA repressor (207 aa).

The segment at residues Val33 to Asn52 is a DNA-binding region (H-T-H motif). Residues Ser129 and Lys166 each act as for autocatalytic cleavage activity in the active site.

This sequence belongs to the peptidase S24 family. As to quaternary structure, homodimer.

The catalysed reaction is Hydrolysis of Ala-|-Gly bond in repressor LexA.. Represses a number of genes involved in the response to DNA damage (SOS response), including recA and lexA. In the presence of single-stranded DNA, RecA interacts with LexA causing an autocatalytic cleavage which disrupts the DNA-binding part of LexA, leading to derepression of the SOS regulon and eventually DNA repair. This chain is LexA repressor, found in Oleidesulfovibrio alaskensis (strain ATCC BAA-1058 / DSM 17464 / G20) (Desulfovibrio alaskensis).